The following is a 487-amino-acid chain: MERREVESFFERATSIRALVVGDLMLDEYLWGRAERISPEAPVQVVEVAREDLRLGGAGNVVNNLAALGCQVSVCSVIGSDENGALLRRALEEKGAGLEGLFEEGERRTSKKTRVLAANQQIVRIDRETKSSIAAASEQGIIDYLAARSGDFDVIVVSDYLKGVLTPAVLSAVCRSGRELGIPVVVDPKGNDYGKYRGATILTPNRKEAEIASGVAITDQESLQCAASGLLSCLELDALLITRSEAGMSLFPAAGGAVHIPTVAREVFDVTGAGDTVISVLSLGLACGLTMADAAWIANVAAGIAVGKLGTSTVAPQEIVAEVGHGAKDSDSKIKNLDVLAHAIAREHSRGKKVVFTNGCFDLLHVGHVKYLQKARGLGDILVVGLNTDASVRRLKGEKRPLIEETERAHILAALDCIDYVVLFDEDTPLKVIETLGPDILVKGGDYSIEGVVGREVVEARGGRVELIQFVDGRSTSRIIEKILSSY.

The segment at 1 to 326 (MERREVESFF…QEIVAEVGHG (326 aa)) is ribokinase. 205 to 208 (NRKE) is an ATP binding site. Aspartate 275 is an active-site residue. Positions 356–487 (FTNGCFDLLH…RIIEKILSSY (132 aa)) are cytidylyltransferase.

In the N-terminal section; belongs to the carbohydrate kinase PfkB family. This sequence in the C-terminal section; belongs to the cytidylyltransferase family. In terms of assembly, homodimer.

It catalyses the reaction D-glycero-beta-D-manno-heptose 7-phosphate + ATP = D-glycero-beta-D-manno-heptose 1,7-bisphosphate + ADP + H(+). It carries out the reaction D-glycero-beta-D-manno-heptose 1-phosphate + ATP + H(+) = ADP-D-glycero-beta-D-manno-heptose + diphosphate. It functions in the pathway nucleotide-sugar biosynthesis; ADP-L-glycero-beta-D-manno-heptose biosynthesis; ADP-L-glycero-beta-D-manno-heptose from D-glycero-beta-D-manno-heptose 7-phosphate: step 1/4. Its pathway is nucleotide-sugar biosynthesis; ADP-L-glycero-beta-D-manno-heptose biosynthesis; ADP-L-glycero-beta-D-manno-heptose from D-glycero-beta-D-manno-heptose 7-phosphate: step 3/4. Functionally, catalyzes the phosphorylation of D-glycero-D-manno-heptose 7-phosphate at the C-1 position to selectively form D-glycero-beta-D-manno-heptose-1,7-bisphosphate. Catalyzes the ADP transfer from ATP to D-glycero-beta-D-manno-heptose 1-phosphate, yielding ADP-D-glycero-beta-D-manno-heptose. The chain is Bifunctional protein HldE from Citrifermentans bemidjiense (strain ATCC BAA-1014 / DSM 16622 / JCM 12645 / Bem) (Geobacter bemidjiensis).